Consider the following 466-residue polypeptide: Methylenomycin A resistance protein (466 aa).

Helical transmembrane passes span 16-36, 56-76, 83-103, 113-133, 146-166, 168-188, 203-223, 234-254, 276-296, 305-325, 337-357, 367-387, 409-429, and 434-454; these read ISVL…VTVV, WVVD…GALA, TIYI…AASI, LIQG…LAAS, LWAA…GVLV, LAGW…ALIS, VNII…YALI, VILV…LREI, FIGF…SLFL, FMAG…NLLF, LMFV…VLIS, VLMS…TTVI, IGAL…ATWY, and FAFL…WLFL.

Belongs to the major facilitator superfamily. EmrB family.

It is found in the cell membrane. Resistance to the epoxide antibiotic methylenomycin. The sequence is that of Methylenomycin A resistance protein (mmr) from Bacillus subtilis (strain 168).